The following is a 315-amino-acid chain: Malate dehydrogenase (315 aa).

NAD(+)-binding positions include 10 to 15 and D34; that span reads GAGNVG. R85 and R91 together coordinate substrate. NAD(+) is bound by residues N98 and 121-123; that span reads VSN. The substrate site is built by N123 and R154. Residue H178 is the Proton acceptor of the active site.

The protein belongs to the LDH/MDH superfamily. MDH type 3 family.

It catalyses the reaction (S)-malate + NAD(+) = oxaloacetate + NADH + H(+). In terms of biological role, catalyzes the reversible oxidation of malate to oxaloacetate. In Rhodopirellula baltica (strain DSM 10527 / NCIMB 13988 / SH1), this protein is Malate dehydrogenase.